The primary structure comprises 483 residues: MGNEVRVRYAPSPTGHLHIGNARTALFNYLFARNQGGKFIIRVEDTDKKRNIEGGEQSQLNYLKWLGIDWDESVDVGGEYGPYRQSERNDIYKVYYEELLEKGLAYKCYCTEEELEKEREEQIARGEMPRYSGKHRDLTQEEQEKFIAEGRKPSIRFRVPEGKVIAFNDIVKGEISFESDGIGDFVIVKKDGTPTYNFAVAIDDYLMKMTHVLRGEDHISNTPKQIMIYQAFGWDIPQFGHMTLIVNESRKKLSKRDESIIQFIEQYKELGYLPEALFNFIGLLGWSPVGEEELFTKEQFIEIFDVNRLSKSPALFDMHKLKWVNNQYVKKLDLDQVVELTLPHLQKAGKVGTELSAEEQEWVRKLISLYHEQLSYGAEIVELTDLFFTDEIEYNQEAKAVLEEEQVPEVLSTFAAKLEELEEFTPDNIKASIKAVQKETGHKGKKLFMPIRVAVTGQTHGPELPQSIELIGKETAIQRLKNI.

The 'HIGH' region motif lies at 11-21; sequence PSPTGHLHIGN. Residues Cys-108, Cys-110, His-135, and Asp-137 each coordinate Zn(2+). Residues 252 to 256 carry the 'KMSKS' region motif; that stretch reads KLSKR. Lys-255 lines the ATP pocket.

Belongs to the class-I aminoacyl-tRNA synthetase family. Glutamate--tRNA ligase type 1 subfamily. In terms of assembly, monomer. It depends on Zn(2+) as a cofactor.

The protein localises to the cytoplasm. It carries out the reaction tRNA(Glu) + L-glutamate + ATP = L-glutamyl-tRNA(Glu) + AMP + diphosphate. Functionally, catalyzes the attachment of glutamate to tRNA(Glu) in a two-step reaction: glutamate is first activated by ATP to form Glu-AMP and then transferred to the acceptor end of tRNA(Glu). The protein is Glutamate--tRNA ligase of Bacillus subtilis (strain 168).